A 428-amino-acid chain; its full sequence is Serine--tRNA ligase (428 aa).

Residue 231-233 participates in L-serine binding; that stretch reads TSE. ATP-binding positions include 262 to 264 and valine 278; that span reads RRE. Glutamate 285 serves as a coordination point for L-serine. 349–352 is an ATP binding site; sequence ELTS. Threonine 384 contacts L-serine.

It belongs to the class-II aminoacyl-tRNA synthetase family. Type-1 seryl-tRNA synthetase subfamily. In terms of assembly, homodimer. The tRNA molecule binds across the dimer.

The protein localises to the cytoplasm. It carries out the reaction tRNA(Ser) + L-serine + ATP = L-seryl-tRNA(Ser) + AMP + diphosphate + H(+). It catalyses the reaction tRNA(Sec) + L-serine + ATP = L-seryl-tRNA(Sec) + AMP + diphosphate + H(+). It functions in the pathway aminoacyl-tRNA biosynthesis; selenocysteinyl-tRNA(Sec) biosynthesis; L-seryl-tRNA(Sec) from L-serine and tRNA(Sec): step 1/1. In terms of biological role, catalyzes the attachment of serine to tRNA(Ser). Is also able to aminoacylate tRNA(Sec) with serine, to form the misacylated tRNA L-seryl-tRNA(Sec), which will be further converted into selenocysteinyl-tRNA(Sec). This Bifidobacterium longum (strain NCC 2705) protein is Serine--tRNA ligase.